Reading from the N-terminus, the 764-residue chain is 5-methyltetrahydropteroyltriglutamate--homocysteine methyltransferase (764 aa).

5-methyltetrahydropteroyltri-L-glutamate contacts are provided by residues 19-22 and K113; that span reads RELK. L-homocysteine is bound by residues 435-437 and E488; that span reads IGS. L-methionine contacts are provided by residues 435–437 and E488; that span reads IGS. Residues 519 to 520 and W565 each bind 5-methyltetrahydropteroyltri-L-glutamate; that span reads RC. D603 provides a ligand contact to L-homocysteine. D603 provides a ligand contact to L-methionine. Residue E609 participates in 5-methyltetrahydropteroyltri-L-glutamate binding. Zn(2+)-binding residues include H645, C647, and E669. H698 (proton donor) is an active-site residue. Residue C730 participates in Zn(2+) binding.

Belongs to the vitamin-B12 independent methionine synthase family. It depends on Zn(2+) as a cofactor.

The enzyme catalyses 5-methyltetrahydropteroyltri-L-glutamate + L-homocysteine = tetrahydropteroyltri-L-glutamate + L-methionine. Its pathway is amino-acid biosynthesis; L-methionine biosynthesis via de novo pathway; L-methionine from L-homocysteine (MetE route): step 1/1. Functionally, catalyzes the transfer of a methyl group from 5-methyltetrahydrofolate to homocysteine resulting in methionine formation. This Desulforamulus reducens (strain ATCC BAA-1160 / DSM 100696 / MI-1) (Desulfotomaculum reducens) protein is 5-methyltetrahydropteroyltriglutamate--homocysteine methyltransferase.